A 421-amino-acid chain; its full sequence is 4-hydroxy-3-methylbut-2-en-1-yl diphosphate synthase (flavodoxin) (421 aa).

The [4Fe-4S] cluster site is built by cysteine 311, cysteine 314, cysteine 357, and glutamate 364.

This sequence belongs to the IspG family. The cofactor is [4Fe-4S] cluster.

It carries out the reaction (2E)-4-hydroxy-3-methylbut-2-enyl diphosphate + oxidized [flavodoxin] + H2O + 2 H(+) = 2-C-methyl-D-erythritol 2,4-cyclic diphosphate + reduced [flavodoxin]. It functions in the pathway isoprenoid biosynthesis; isopentenyl diphosphate biosynthesis via DXP pathway; isopentenyl diphosphate from 1-deoxy-D-xylulose 5-phosphate: step 5/6. In terms of biological role, converts 2C-methyl-D-erythritol 2,4-cyclodiphosphate (ME-2,4cPP) into 1-hydroxy-2-methyl-2-(E)-butenyl 4-diphosphate. The chain is 4-hydroxy-3-methylbut-2-en-1-yl diphosphate synthase (flavodoxin) from Xanthomonas oryzae pv. oryzae (strain MAFF 311018).